Consider the following 284-residue polypeptide: Nucleotide-binding protein CPS_4546 (284 aa).

Position 8–15 (G8–S15) interacts with ATP. GTP is bound at residue D56–N59.

It belongs to the RapZ-like family.

Displays ATPase and GTPase activities. This chain is Nucleotide-binding protein CPS_4546, found in Colwellia psychrerythraea (strain 34H / ATCC BAA-681) (Vibrio psychroerythus).